The chain runs to 570 residues: Adenine deaminase (570 aa).

The protein belongs to the metallo-dependent hydrolases superfamily. Adenine deaminase family. Mn(2+) is required as a cofactor.

The catalysed reaction is adenine + H2O + H(+) = hypoxanthine + NH4(+). In Oleidesulfovibrio alaskensis (strain ATCC BAA-1058 / DSM 17464 / G20) (Desulfovibrio alaskensis), this protein is Adenine deaminase.